The primary structure comprises 320 residues: UDP-3-O-acyl-N-acetylglucosamine deacetylase (320 aa).

The Zn(2+) site is built by His-92, His-251, and Asp-255. His-278 (proton donor) is an active-site residue.

The protein belongs to the LpxC family. It depends on Zn(2+) as a cofactor.

The catalysed reaction is a UDP-3-O-[(3R)-3-hydroxyacyl]-N-acetyl-alpha-D-glucosamine + H2O = a UDP-3-O-[(3R)-3-hydroxyacyl]-alpha-D-glucosamine + acetate. It functions in the pathway glycolipid biosynthesis; lipid IV(A) biosynthesis; lipid IV(A) from (3R)-3-hydroxytetradecanoyl-[acyl-carrier-protein] and UDP-N-acetyl-alpha-D-glucosamine: step 2/6. Catalyzes the hydrolysis of UDP-3-O-myristoyl-N-acetylglucosamine to form UDP-3-O-myristoylglucosamine and acetate, the committed step in lipid A biosynthesis. The sequence is that of UDP-3-O-acyl-N-acetylglucosamine deacetylase from Psychrobacter cryohalolentis (strain ATCC BAA-1226 / DSM 17306 / VKM B-2378 / K5).